Consider the following 570-residue polypeptide: nebramycin 5' synthase (570 aa).

The interval Met-1 to Gly-354 is kae1-like. Asp-12 serves as a coordination point for tobramycin. His-14 functions as the Proton acceptor in the catalytic mechanism. Lys-39 contributes to the ATP binding site. Residues His-114, His-118, and Asp-137 each coordinate Fe cation. The carbamoyl adenylate site is built by Gln-139, Gly-168, and Glu-172. Tobramycin contacts are provided by Glu-172 and Asp-228. The carbamoyl adenylate site is built by Gly-310 and Asn-314. Asp-338 provides a ligand contact to Fe cation. Positions Gly-367 to His-570 are yrdC-like. ATP contacts are provided by Arg-418 and Arg-449. A carbamoyl phosphate-binding site is contributed by Arg-418–Ala-419. Residues Arg-498 and Asn-528–Ser-530 contribute to the carbamoyl phosphate site.

Belongs to the NodU/CmcH family. The cofactor is Fe(2+).

The catalysed reaction is tobramycin + carbamoyl phosphate + ATP + H2O = nebramycin 5' + AMP + phosphate + diphosphate + H(+). It carries out the reaction kanamycin A + carbamoyl phosphate + ATP + H2O = 6''-O-carbamoylkanamycin A + AMP + phosphate + diphosphate + H(+). The enzyme catalyses carbamoyl phosphate + ATP + H2O = carbamoyl adenylate + phosphate + diphosphate. It catalyses the reaction tobramycin + carbamoyl adenylate = nebramycin 5' + AMP + H(+). The catalysed reaction is carbamoyl adenylate + kanamycin A = 6''-O-carbamoylkanamycin A + AMP + H(+). Its pathway is antibiotic biosynthesis; kanamycin biosynthesis. It functions in the pathway antibiotic biosynthesis; tobramycin biosynthesis. With respect to regulation, ADP inhibits the formation of nebramycin 5'. Functionally, tobZ is involved in the biosynthesis of the 2-deoxystreptamine-containing aminoglycoside antibiotics such as nebramycin 5 and 6-O-carbamoylkanamycin. Catalyzes the hydrolysis of carbamoyl phosphate and its subsequent adenylation by ATP to yield O-carbamoyladenylate. Then it catalyzes the transfer of the carbamoyl moiety from O-carbamoyladenylate to the tobramycin 6-hydroxy group to yield nebramycin 5'. It catalyzes the same reaction with kanamycin A. These reactions are considerably slower in the presence of deoxy-ATP. This Streptoalloteichus tenebrarius (strain ATCC 17920 / DSM 40477 / JCM 4838 / CBS 697.72 / NBRC 16177 / NCIMB 11028 / NRRL B-12390 / A12253. 1 / ISP 5477) (Streptomyces tenebrarius) protein is nebramycin 5' synthase (tobZ).